The following is a 681-amino-acid chain: Glutamine--fructose-6-phosphate aminotransferase [isomerizing] 1 (681 aa).

The For GATase activity role is filled by cysteine 2. The 286-residue stretch at 2–287 folds into the Glutamine amidotransferase type-2 domain; it reads CGIFAYLNYH…DDDVAAVVDG (286 aa). Phosphoserine is present on residues serine 103 and serine 243. An isomerase region spans residues 295-662; it reads KRTARDHPGR…LQLLAFHLAV (368 aa). SIS domains lie at 359 to 498 and 530 to 671; these read HIKE…DRIS and LATE…VDFP. Residues 376-377, 421-423, threonine 426, and histidine 577 contribute to the substrate site; these read TS and SQS.

In terms of assembly, homotetramer, may also exist as homodimers.

It catalyses the reaction D-fructose 6-phosphate + L-glutamine = D-glucosamine 6-phosphate + L-glutamate. The protein operates within nucleotide-sugar biosynthesis; UDP-N-acetyl-alpha-D-glucosamine biosynthesis; alpha-D-glucosamine 6-phosphate from D-fructose 6-phosphate: step 1/1. With respect to regulation, inhibited by 4,4'-dithiodipyridine. Functionally, controls the flux of glucose into the hexosamine pathway. Most likely involved in regulating the availability of precursors for N- and O-linked glycosylation of proteins. Regulates the circadian expression of clock genes BMAL1 and CRY1. Has a role in fine tuning the metabolic fluctuations of cytosolic UDP-GlcNAc and its effects on hyaluronan synthesis that occur during tissue remodeling. This is Glutamine--fructose-6-phosphate aminotransferase [isomerizing] 1 (Gfpt1) from Rattus norvegicus (Rat).